A 998-amino-acid chain; its full sequence is 2-imino-3-(indol-3-yl)propanoate dimerase (998 aa).

It carries out the reaction 2 H2O2 = O2 + 2 H2O. The enzyme catalyses 2 2-iminio-3-(indol-3-yl)propanoate + H2O2 = indole-3-pyruvate imine dimer + 2 H2O. The protein operates within pigment biosynthesis; violacein biosynthesis. Catalyzes the hydrogen peroxide-dependent dimerization of two L-tryptophan-derived molecules (imine form of indole 3-pyruvate (IPA)), to form an uncharacterized product suggested to be indole-3-pyruvate imine dimer that can spontaneously convert into dichlorochromopyrrolate (CPA). The uncharacterized product is the substrate of VioE. This is 2-imino-3-(indol-3-yl)propanoate dimerase (vioB) from Chromobacterium violaceum (strain ATCC 12472 / DSM 30191 / JCM 1249 / CCUG 213 / NBRC 12614 / NCIMB 9131 / NCTC 9757 / MK).